The sequence spans 99 residues: U1-theraphotoxin-Tal1a (99 aa).

Positions 1–22 (MNTIQVIIFAVVLVLTVTVGQA) are cleaved as a signal peptide. The propeptide occupies 23-57 (DEDSAETSLLRKLKEAEASLFGQHLEESQHSREKR). 3 cysteine pairs are disulfide-bonded: C58–C73, C65–C78, and C72–C93. S98 is modified (serine amide).

This sequence belongs to the neurotoxin 14 (magi-1) family. 08 (Ltx-4) subfamily. As to expression, expressed by the venom gland.

The protein localises to the secreted. Its function is as follows. Insecticidal toxin that shows strong lethal effects on American cockroaches (P.americana) and common mealbeetle (T.molitor). Possibly acts by blocking ion channel currents. Also shows significant analgesic effects in mice models of pain including abdominal writhing induced by acetic acid and formalin-induced paw licking tests. In addition, exerts marked inhibition of proliferation of some human tumor cell lines including C8166, Molt-4, A-549, BIU-87, T24, and Calu-6. The sequence is that of U1-theraphotoxin-Tal1a from Tliltocatl albopilosus (Curlyhair tarantula).